We begin with the raw amino-acid sequence, 567 residues long: Dihydroxy-acid dehydratase 3 (567 aa).

Residue Cys-57 coordinates [2Fe-2S] cluster. Asp-89 contributes to the Mg(2+) binding site. Cys-130 serves as a coordination point for [2Fe-2S] cluster. Residues Asp-131 and Lys-132 each contribute to the Mg(2+) site. Residue Lys-132 is modified to N6-carboxylysine. Cys-202 contacts [2Fe-2S] cluster. Residue Glu-454 participates in Mg(2+) binding. Ser-480 serves as the catalytic Proton acceptor.

This sequence belongs to the IlvD/Edd family. As to quaternary structure, homodimer. It depends on [2Fe-2S] cluster as a cofactor. Mg(2+) is required as a cofactor.

The enzyme catalyses (2R)-2,3-dihydroxy-3-methylbutanoate = 3-methyl-2-oxobutanoate + H2O. The catalysed reaction is (2R,3R)-2,3-dihydroxy-3-methylpentanoate = (S)-3-methyl-2-oxopentanoate + H2O. It participates in amino-acid biosynthesis; L-isoleucine biosynthesis; L-isoleucine from 2-oxobutanoate: step 3/4. Its pathway is amino-acid biosynthesis; L-valine biosynthesis; L-valine from pyruvate: step 3/4. Its function is as follows. Functions in the biosynthesis of branched-chain amino acids. Catalyzes the dehydration of (2R,3R)-2,3-dihydroxy-3-methylpentanoate (2,3-dihydroxy-3-methylvalerate) into 2-oxo-3-methylpentanoate (2-oxo-3-methylvalerate) and of (2R)-2,3-dihydroxy-3-methylbutanoate (2,3-dihydroxyisovalerate) into 2-oxo-3-methylbutanoate (2-oxoisovalerate), the penultimate precursor to L-isoleucine and L-valine, respectively. This is Dihydroxy-acid dehydratase 3 from Aromatoleum aromaticum (strain DSM 19018 / LMG 30748 / EbN1) (Azoarcus sp. (strain EbN1)).